We begin with the raw amino-acid sequence, 497 residues long: Probable pyruvate kinase, cytosolic isozyme (497 aa).

Arg-37 is a substrate binding site. The K(+) site is built by Asn-39, Ser-41, Asp-71, and Thr-72. Asn-39–His-42 serves as a coordination point for ATP. The ATP site is built by Arg-78 and Lys-163. Residue Lys-227 coordinates substrate. Glu-229 lines the Mg(2+) pocket. The substrate site is built by Gly-252, Asp-253, and Thr-285. Asp-253 serves as a coordination point for Mg(2+).

This sequence belongs to the pyruvate kinase family. Homotetramer. It depends on Mg(2+) as a cofactor. K(+) is required as a cofactor.

The protein localises to the cytoplasm. It is found in the cytosol. The catalysed reaction is pyruvate + ATP = phosphoenolpyruvate + ADP + H(+). Its pathway is carbohydrate degradation; glycolysis; pyruvate from D-glyceraldehyde 3-phosphate: step 5/5. Functionally, key regulatory enzyme of the glycolytic pathway that catalyzes the final step of glycolysis, converting ADP and phosphoenolpyruvate (PEP) to ATP and pyruvate by essentially irreversible transphosphorylation. The polypeptide is Probable pyruvate kinase, cytosolic isozyme (Arabidopsis thaliana (Mouse-ear cress)).